A 381-amino-acid polypeptide reads, in one-letter code: Homoserine O-succinyltransferase (381 aa).

Residues 45–360 form the AB hydrolase-1 domain; sequence NAVLVCHALN…PHGHDAFLLD (316 aa). The active-site Nucleophile is the S151. R221 serves as a coordination point for substrate. Residues D321 and H354 contribute to the active site. D355 contacts substrate.

It belongs to the AB hydrolase superfamily. MetX family. As to quaternary structure, homodimer.

The protein localises to the cytoplasm. The enzyme catalyses L-homoserine + succinyl-CoA = O-succinyl-L-homoserine + CoA. It participates in amino-acid biosynthesis; L-methionine biosynthesis via de novo pathway; O-succinyl-L-homoserine from L-homoserine: step 1/1. Functionally, transfers a succinyl group from succinyl-CoA to L-homoserine, forming succinyl-L-homoserine. The sequence is that of Homoserine O-succinyltransferase from Burkholderia vietnamiensis (strain G4 / LMG 22486) (Burkholderia cepacia (strain R1808)).